We begin with the raw amino-acid sequence, 319 residues long: tRNA (guanine-N(7)-)-methyltransferase (319 aa).

The S-adenosyl-L-methionine site is built by glutamate 28, glutamate 51, and aspartate 75. Substrate-binding positions include aspartate 134 and 167–170 (TKYE).

It belongs to the class I-like SAM-binding methyltransferase superfamily. TrmB family.

It carries out the reaction guanosine(46) in tRNA + S-adenosyl-L-methionine = N(7)-methylguanosine(46) in tRNA + S-adenosyl-L-homocysteine. It participates in tRNA modification; N(7)-methylguanine-tRNA biosynthesis. Catalyzes the formation of N(7)-methylguanine at position 46 (m7G46) in tRNA. The sequence is that of tRNA (guanine-N(7)-)-methyltransferase from Coprothermobacter proteolyticus (strain ATCC 35245 / DSM 5265 / OCM 4 / BT).